A 122-amino-acid chain; its full sequence is Large ribosomal subunit protein uL14 (122 aa).

This sequence belongs to the universal ribosomal protein uL14 family. Part of the 50S ribosomal subunit. Forms a cluster with proteins L3 and L19. In the 70S ribosome, L14 and L19 interact and together make contacts with the 16S rRNA in bridges B5 and B8.

Functionally, binds to 23S rRNA. Forms part of two intersubunit bridges in the 70S ribosome. The sequence is that of Large ribosomal subunit protein uL14 from Mesomycoplasma hyopneumoniae (strain 232) (Mycoplasma hyopneumoniae).